The primary structure comprises 309 residues: Elongation factor Ts (309 aa).

Residues 82–85 are involved in Mg(2+) ion dislocation from EF-Tu; it reads TDFV.

Belongs to the EF-Ts family.

The protein resides in the cytoplasm. Associates with the EF-Tu.GDP complex and induces the exchange of GDP to GTP. It remains bound to the aminoacyl-tRNA.EF-Tu.GTP complex up to the GTP hydrolysis stage on the ribosome. In Rickettsia rickettsii (strain Iowa), this protein is Elongation factor Ts.